The chain runs to 239 residues: MGKRIIPQRRGKASPVFKTPDHIHVAPARYPLLDPSKTYKAVVEDLVHDPGRWVPLAQVKLETGLVFYVPAVEGMYAGQIIEIGPGAKPVNGNILPVGMIPEGMQVVNIEKRPGDGGKFVRASGTYAVIVGRAGGKTQVQLPSGRVIEVPNESRAMIGVIAGGGRLEKPLLKAGAAYYKWSAKSRVWPKVRGVAMNAAFHPHGGGSHQHVGRPSTVARNTPPGRKVGHIAARRTGRRKG.

The disordered stretch occupies residues 202-239; the sequence is HGGGSHQHVGRPSTVARNTPPGRKVGHIAARRTGRRKG. The span at 225–239 shows a compositional bias: basic residues; that stretch reads KVGHIAARRTGRRKG.

It belongs to the universal ribosomal protein uL2 family. Part of the 50S ribosomal subunit. Forms a bridge to the 30S subunit in the 70S ribosome.

In terms of biological role, one of the primary rRNA binding proteins. Required for association of the 30S and 50S subunits to form the 70S ribosome, for tRNA binding and peptide bond formation. It has been suggested to have peptidyltransferase activity; this is somewhat controversial. Makes several contacts with the 16S rRNA in the 70S ribosome. This Desulfurococcus amylolyticus (strain DSM 18924 / JCM 16383 / VKM B-2413 / 1221n) (Desulfurococcus kamchatkensis) protein is Large ribosomal subunit protein uL2.